We begin with the raw amino-acid sequence, 475 residues long: C3a anaphylatoxin chemotactic receptor (475 aa).

The Extracellular segment spans residues 1–23; sequence MESSSAETNSTGLHLEPQYQPET. N-linked (GlcNAc...) asparagine glycosylation occurs at N9. A helical transmembrane segment spans residues 24-46; that stretch reads ILAMAILGLTFVLGLPGNGLVLW. The Cytoplasmic portion of the chain corresponds to 47–57; sequence VAGLKMRRTVN. A helical transmembrane segment spans residues 58 to 80; it reads TVWFLHLTVADFVCCLSLPFSMA. Residues 81–96 are Extracellular-facing; that stretch reads HLALRGYWPYGEILCK. Cysteines 95 and 172 form a disulfide. Residues 97–118 traverse the membrane as a helical segment; sequence FIPTVIIFNMFASVFLLTAISL. The Cytoplasmic segment spans residues 119-139; it reads DRCLMVLKPIWCQNHRNVRTA. Residues 140–160 form a helical membrane-spanning segment; it reads CIICGCIWLVAFVLCIPVFVY. Over 161-331 the chain is Extracellular; it reads RETFTLENHT…RLLKVITFTR (171 aa). N168 is a glycosylation site (N-linked (GlcNAc...) asparagine). A sulfotyrosine mark is found at Y174 and Y183. 2 N-linked (GlcNAc...) asparagine glycosylation sites follow: N273 and N292. Residues 332–351 form a helical membrane-spanning segment; that stretch reads LVVGFLLPMIIMVACYTLII. Over 352 to 368 the chain is Cytoplasmic; the sequence is FRMRRVRVVKSWNKALH. Residues 369 to 391 form a helical membrane-spanning segment; sequence LAMVVVTIFLICWAPYHVFGVLI. Over 392-408 the chain is Extracellular; that stretch reads LFINPESRVGAALLSWD. The helical transmembrane segment at 409 to 429 threads the bilayer; it reads HVSIALASANSCFNPFLYALL. Topologically, residues 430-475 are cytoplasmic; it reads GRDLRKRVRQSMKGILEAAFSEDISKSTSFIQAKAFSEKHSLSTNV. S450 bears the Phosphoserine mark.

It belongs to the G-protein coupled receptor 1 family. In terms of assembly, interacts with VGF-derived peptide TLQP-21. Expressed in the heart, kidney, lung, liver, peritoneal macrophages and spleen.

It localises to the cell membrane. Receptor for the chemotactic and inflammatory peptide anaphylatoxin C3a. This receptor stimulates chemotaxis, granule enzyme release and superoxide anion production. This is C3a anaphylatoxin chemotactic receptor (C3AR1) from Cavia porcellus (Guinea pig).